Here is a 673-residue protein sequence, read N- to C-terminus: Polyadenylate-binding protein, cytoplasmic and nuclear (673 aa).

The disordered stretch occupies residues 1 to 39 (MSAETATSPAPAAETPVAPAPATQTTPAEGAPTPAAAAP). RRM domains lie at 46 to 124 (ASLY…WSQR), 134 to 211 (GNIF…HHVG), 227 to 304 (TNVY…RAQT), and 330 to 407 (VNLY…LAQR). A disordered region spans residues 300-322 (GRAQTKSEREAELKKSHEEKRLE). A compositionally biased stretch (basic and acidic residues) spans 304–322 (TKSEREAELKKSHEEKRLE). Disordered stretches follow at residues 509–572 (APGY…AGRL) and 644–673 (WGKD…EKKE). The 78-residue stretch at 569 to 646 (AGRLDAQSLA…ALRVLAEWGK (78 aa)) folds into the PABC domain.

The protein belongs to the polyadenylate-binding protein type-1 family.

The protein resides in the cytoplasm. It is found in the nucleus. In terms of biological role, binds the poly(A) tail of mRNA. Appears to be an important mediator of the multiple roles of the poly(A) tail in mRNA biogenesis, stability and translation. In the nucleus, involved in both mRNA cleavage and polyadenylation. Is also required for efficient mRNA export to the cytoplasm. Acts in concert with a poly(A)-specific nuclease (PAN) to affect poly(A) tail shortening, which may occur concomitantly with either nucleocytoplasmic mRNA transport or translational initiation. In the cytoplasm, stimulates translation initiation and regulates mRNA decay through translation termination-coupled poly(A) shortening, probably mediated by PAN. This is Polyadenylate-binding protein, cytoplasmic and nuclear (PAB1) from Cryptococcus neoformans var. neoformans serotype D (strain B-3501A) (Filobasidiella neoformans).